Reading from the N-terminus, the 202-residue chain is Ribonuclease HII (202 aa).

Positions 15-202 (QGVAGVDEAG…APIKAFGISA (188 aa)) constitute an RNase H type-2 domain. A divalent metal cation-binding residues include D21, E22, and D113.

This sequence belongs to the RNase HII family. Requires Mn(2+) as cofactor. Mg(2+) serves as cofactor.

It localises to the cytoplasm. It carries out the reaction Endonucleolytic cleavage to 5'-phosphomonoester.. Its function is as follows. Endonuclease that specifically degrades the RNA of RNA-DNA hybrids. The sequence is that of Ribonuclease HII from Bordetella avium (strain 197N).